The sequence spans 803 residues: Volume-regulated anion channel subunit LRRC8B (803 aa).

The Cytoplasmic portion of the chain corresponds to 1–25; that stretch reads MITLTELKCLADAQSSYHILKPWWD. The helical transmembrane segment at 26–46 threads the bilayer; it reads VFWYYITLIMLLVAVLAGALQ. The Extracellular portion of the chain corresponds to 47-119; that stretch reads LTQSRVLCCL…YEKQLHWFAK (73 aa). Cystine bridges form between Cys-55/Cys-304 and Cys-109/Cys-289. Asn-78 carries N-linked (GlcNAc...) asparagine glycosylation. A helical transmembrane segment spans residues 120 to 140; sequence FFPYLVLLHTLIFAACSNFWL. Residues 141-261 lie on the Cytoplasmic side of the membrane; that stretch reads HYPSTSSRLE…DIIYRVYLKQ (121 aa). Phosphoserine occurs at positions 186 and 196. The helical transmembrane segment at 262 to 282 threads the bilayer; the sequence is IIVKVILFVLIITYVPYFLSY. At 283-307 the chain is on the extracellular side; it reads ITLEIDCSIDVQAFTGYKRYQCVYS. Residues 308-328 form a helical membrane-spanning segment; the sequence is LAEIFKVLASFYVILVMLYGL. Residues 329 to 803 lie on the Cytoplasmic side of the membrane; it reads TSSYSLWWML…ERLQTCLDKC (475 aa). 15 LRR repeats span residues 415-439, 440-462, 464-486, 488-509, 511-532, 539-559, 562-582, 586-607, 609-630, 634-655, 657-678, 680-701, 703-724, 726-747, and 749-771; these read VKNS…VFEL, TEME…VAQL, NLRE…AFLE, NLRI…VFHL, NLKE…LHLE, NLRT…VTDL, SLQK…NNLK, NLKS…IFSL, NLHE…ISFQ, SLSC…IGAL, NLEQ…LFLC, KLHY…IQYL, NLQY…LFQC, KLQC…VGEL, and NLTH…EGCQ.

It belongs to the LRRC8 family. In terms of assembly, heterohexamer; oligomerizes with other LRRC8 proteins (LRRC8A, LRRC8C, LRRC8D and/or LRRC8E) to form a heterohexamer. In vivo, the subunit composition may depend primarily on expression levels, and heterooligomeric channels containing various proportions of the different LRRC8 proteins may coexist.

Its subcellular location is the cell membrane. It is found in the endoplasmic reticulum membrane. It carries out the reaction chloride(in) = chloride(out). The enzyme catalyses iodide(out) = iodide(in). The catalysed reaction is taurine(out) = taurine(in). Its function is as follows. Non-essential component of the volume-regulated anion channel (VRAC, also named VSOAC channel), an anion channel required to maintain a constant cell volume in response to extracellular or intracellular osmotic changes. The VRAC channel conducts iodide better than chloride and can also conduct organic osmolytes like taurine. Channel activity requires LRRC8A plus at least one other family member (LRRC8B, LRRC8C, LRRC8D or LRRC8E); channel characteristics depend on the precise subunit composition. The polypeptide is Volume-regulated anion channel subunit LRRC8B (Mus musculus (Mouse)).